A 728-amino-acid polypeptide reads, in one-letter code: Bacteriophytochrome (728 aa).

Cys12 serves as a coordination point for a tetrapyrrole. The chromophore binding domain stretch occupies residues 17 to 495 (IHVPGAIQPH…RLDLMELCLN (479 aa)). The GAF domain occupies 139–303 (DTASLLSNVT…IFSQVCSAIV (165 aa)). Residues 510–721 (VLGHDLRNPL…TFCLRLPVRQ (212 aa)) enclose the Histidine kinase domain. His513 is subject to Phosphohistidine; by autocatalysis.

It in the N-terminal section; belongs to the phytochrome family. Post-translationally, contains one covalently linked tetrapyrrole chromophore.

The enzyme catalyses ATP + protein L-histidine = ADP + protein N-phospho-L-histidine.. Functionally, photoreceptor which exists in two forms that are reversibly interconvertible by light: the R form that absorbs maximally in the red region of the spectrum and the FR form that absorbs maximally in the far-red region. This Pseudomonas aeruginosa (strain ATCC 15692 / DSM 22644 / CIP 104116 / JCM 14847 / LMG 12228 / 1C / PRS 101 / PAO1) protein is Bacteriophytochrome (bphP).